The sequence spans 77 residues: DNA-directed RNA polymerase subunit epsilon (77 aa).

This sequence belongs to the RNA polymerase subunit epsilon family. In terms of assembly, RNAP is composed of a core of 2 alpha, a beta and a beta' subunit. The core is associated with a delta subunit, and at least one of epsilon or omega. When a sigma factor is associated with the core the holoenzyme is formed, which can initiate transcription.

It carries out the reaction RNA(n) + a ribonucleoside 5'-triphosphate = RNA(n+1) + diphosphate. Its function is as follows. A non-essential component of RNA polymerase (RNAP). This is DNA-directed RNA polymerase subunit epsilon from Lactobacillus delbrueckii subsp. bulgaricus (strain ATCC 11842 / DSM 20081 / BCRC 10696 / JCM 1002 / NBRC 13953 / NCIMB 11778 / NCTC 12712 / WDCM 00102 / Lb 14).